We begin with the raw amino-acid sequence, 473 residues long: Bactericidal permeability-increasing protein (473 aa).

The first 18 residues, 1–18, serve as a signal peptide directing secretion; sequence MVLCCWLALVALIPMTLS. The segment at 19 to 29 is central sheet, part 1; sequence INPGVKVRLTG. The N-terminal barrel stretch occupies residues 28–209; sequence TGKGLEYGRQ…SDLNPQLKTL (182 aa). A disulfide bond links cysteine 153 and cysteine 192. Residues 211-275 are central sheet, part 2; it reads VLAKVDQYAE…INNMLYISVS (65 aa). The segment at 225-230 is cleavage sites for elastase; that stretch reads MVSSPT. A C-terminal barrel region spans residues 276-446; it reads AFTINSAAFV…LAKGYPLPTL (171 aa). N-linked (GlcNAc...) asparagine glycosylation occurs at asparagine 365. The central sheet, part 3 stretch occupies residues 453–472; that stretch reads NTELQVLKDYMLIGTDVQFT.

Belongs to the BPI/LBP/Plunc superfamily. BPI/LBP family. As to quaternary structure, monomer. Homodimer; disulfide-linked. As to expression, expressed in spleen. Lower expression in gill, head kidney, entire kidney, skin, intestine and blood and lowest expression in liver and muscle.

The protein resides in the secreted. The cytotoxic action of BPI is limited to many species of Gram-negative bacteria; this specificity may be explained by a strong affinity of the very basic N-terminal half for the negatively charged lipopolysaccharides that are unique to the Gram-negative bacterial outer envelope. Exhibits neutralizing capacity towards P.aeruginosa lipopolysaccharides (LPS) and has bactericidal activity against multiple drug resistant (MDR) P.aeruginosa strains derived from people with cystic fibrosis. Has antibacterial activity against E.coli, but not against S.iniae. The sequence is that of Bactericidal permeability-increasing protein from Sebastes schlegelii (Korean rockfish).